A 127-amino-acid polypeptide reads, in one-letter code: Protein ApaG (127 aa).

The ApaG domain maps to 3–127; that stretch reads ANSPPTIKCN…FRLAIPNILH (125 aa).

In Photobacterium profundum (strain SS9), this protein is Protein ApaG.